The following is a 144-amino-acid chain: Nucleoside diphosphate kinase (144 aa).

Residues K5, F53, R81, T87, R98, and N108 each contribute to the ATP site. H111 functions as the Pros-phosphohistidine intermediate in the catalytic mechanism.

Belongs to the NDK family. Mg(2+) is required as a cofactor.

The catalysed reaction is a 2'-deoxyribonucleoside 5'-diphosphate + ATP = a 2'-deoxyribonucleoside 5'-triphosphate + ADP. It catalyses the reaction a ribonucleoside 5'-diphosphate + ATP = a ribonucleoside 5'-triphosphate + ADP. In terms of biological role, major role in the synthesis of nucleoside triphosphates other than ATP. The ATP gamma phosphate is transferred to the NDP beta phosphate via a ping-pong mechanism, using a phosphorylated active-site intermediate. The sequence is that of Nucleoside diphosphate kinase from Solanum lycopersicum (Tomato).